Here is a 286-residue protein sequence, read N- to C-terminus: Formamidopyrimidine-DNA glycosylase (286 aa).

P2 serves as the catalytic Schiff-base intermediate with DNA. E3 serves as the catalytic Proton donor. The active-site Proton donor; for beta-elimination activity is the K61. Residues H96, R115, and K161 each contribute to the DNA site. An FPG-type zinc finger spans residues 247–281 (EAYGREGEPCRRCGRAMRREAFMNRSSYFCPSCQR). R271 serves as the catalytic Proton donor; for delta-elimination activity.

The protein belongs to the FPG family. As to quaternary structure, monomer. The cofactor is Zn(2+).

It catalyses the reaction Hydrolysis of DNA containing ring-opened 7-methylguanine residues, releasing 2,6-diamino-4-hydroxy-5-(N-methyl)formamidopyrimidine.. It carries out the reaction 2'-deoxyribonucleotide-(2'-deoxyribose 5'-phosphate)-2'-deoxyribonucleotide-DNA = a 3'-end 2'-deoxyribonucleotide-(2,3-dehydro-2,3-deoxyribose 5'-phosphate)-DNA + a 5'-end 5'-phospho-2'-deoxyribonucleoside-DNA + H(+). In terms of biological role, involved in base excision repair of DNA damaged by oxidation or by mutagenic agents. Acts as a DNA glycosylase that recognizes and removes damaged bases. Has a preference for oxidized purines, such as 7,8-dihydro-8-oxoguanine (8-oxoG). Has AP (apurinic/apyrimidinic) lyase activity and introduces nicks in the DNA strand. Cleaves the DNA backbone by beta-delta elimination to generate a single-strand break at the site of the removed base with both 3'- and 5'-phosphates. The polypeptide is Formamidopyrimidine-DNA glycosylase (Mycobacteroides abscessus (strain ATCC 19977 / DSM 44196 / CCUG 20993 / CIP 104536 / JCM 13569 / NCTC 13031 / TMC 1543 / L948) (Mycobacterium abscessus)).